Here is a 441-residue protein sequence, read N- to C-terminus: Protein FAM83A (441 aa).

2 disordered regions span residues 81-108 (SNDNQTEGENGSAANGNKSESYYPMNSD) and 312-368 (GMSI…SPLQ). The segment covering 314–327 (SIMSDSNPESINTT) has biased composition (polar residues). Over residues 328–354 (SEPFSSISTASISNDSQRPKSPVSTTP) the composition is skewed to low complexity.

Belongs to the FAM83 family.

Its subcellular location is the cytoplasm. Functionally, may function in the epidermal growth factor receptor/EGFR signaling pathway. The protein is Protein FAM83A of Xenopus tropicalis (Western clawed frog).